Reading from the N-terminus, the 59-residue chain is Large ribosomal subunit protein uL30 (59 aa).

This sequence belongs to the universal ribosomal protein uL30 family. As to quaternary structure, part of the 50S ribosomal subunit.

The chain is Large ribosomal subunit protein uL30 from Acetivibrio thermocellus (strain ATCC 27405 / DSM 1237 / JCM 9322 / NBRC 103400 / NCIMB 10682 / NRRL B-4536 / VPI 7372) (Clostridium thermocellum).